The following is a 1180-amino-acid chain: Nonsense-mediated mRNA decay factor SMG7 (1180 aa).

TPR repeat units lie at residues 151 to 184 and 186 to 218; these read QHCL…VPSN and QPYN…KFPF. Disordered regions lie at residues 496–636, 692–795, 893–913, 1019–1127, and 1148–1180; these read PQEK…TQTT, QTAS…SYMQ, CSDQ…SSPL, SLFE…WAAQ, and SSMM…NPPH. The span at 504–520 shows a compositional bias: polar residues; it reads LQESSNGEQTPNESTHG. Composition is skewed to basic and acidic residues over residues 547 to 559, 584 to 606, and 615 to 627; these read ENIK…REQN, NEQK…KTTD, and TELR…EARK. Residues 692 to 718 are compositionally biased toward polar residues; sequence QTASHPQSANPVQTGKPSHIPYSQQRP. The span at 728–740 shows a compositional bias: pro residues; it reads PPQPQQTQPPPPQ. Low complexity predominate over residues 741-778; it reads TSQQALQQSVQLQLQQQQQQQQQQQQQQQQSPTKQSSQ. The span at 1026–1038 shows a compositional bias: polar residues; it reads WSPSLPASSDHST. Low complexity predominate over residues 1039-1065; it reads PASQSPHSSNPSSLPSSPPTHSHGSMP. A compositionally biased stretch (basic and acidic residues) spans 1076-1090; sequence DSRDRRANDRWKAEK. Residues 1103 to 1125 are compositionally biased toward polar residues; sequence SASTSSVPETNSWHQGAPTSTWA.

The protein resides in the cytoplasm. It is found in the nucleus. Its function is as follows. Plays a role in nonsense-mediated mRNA decay. Recruits UPF1 to cytoplasmic mRNA decay bodies. Together with SMG5 is thought to provide a link to the mRNA degradation machinery involving exonucleolytic pathways, and to serve as an adapter for UPF1 to protein phosphatase 2A (PP2A), thereby triggering UPF1 dephosphorylation. Required for normal embryonic development. This Danio rerio (Zebrafish) protein is Nonsense-mediated mRNA decay factor SMG7.